A 236-amino-acid polypeptide reads, in one-letter code: MHTTQKDTTYTKIFVGGLPYHTTDASLRKYFEVFGEIEEAVVITDRQTGKSRGYGFVTMADRAAAERACKDPNPIIDGRKANVNLAYLGAKPRIMQPGFAFGVQQLHPALIQRPFGIPAHYVYPQAFVQPGVVIPHVQPTAAAASTTPYIDYTGAAYAQYSAAAAAAAAAAAYDQYPYAASPAAAGYVTAGGYGYAVQQPITAAAPGTAAAAAAAAAAAAAFGQYQPQQLQTDRMQ.

Residues 11-88 form the RRM domain; the sequence is TKIFVGGLPY…RKANVNLAYL (78 aa). The segment at 175 to 199 is necessary for interaction with EIF4E; sequence QYPYAASPAAAGYVTAGGYGYAVQQ.

As to quaternary structure, interacts with EIF4E; this interaction prevents EIF4E from binding to p53/TP53 mRNA and inhibits the assembly of translation initiation complex. In terms of assembly, (Microbial infection) Interacts with HCV mature core protein; this interaction, which enhances the interaction of Core with 5'-UTR may favor viral replication over translation. (Microbial infection) Interacts with HCV Serine protease/helicase NS3. In terms of tissue distribution, expressed in fetal and adult heart and skeletal muscles.

Its subcellular location is the nucleus. It localises to the cytoplasm. In terms of biological role, multifunctional RNA-binding protein involved in the regulation of pre-mRNA splicing, mRNA stability and mRNA translation important for cell fate decision and differentiation. Plays a major role in pre-mRNA alternative splicing regulation. Mediates preferentially muscle-specific exon inclusion in numerous mRNAs important for striated cardiac and skeletal muscle cell differentiation. Binds to intronic splicing enhancer (ISE) composed of stretches of GU-rich motifs localized in flanking intron of exon that will be included by alternative splicing. Involved in embryonic stem cell (ESC) transition to cardiac cell differentiation by promoting pre-mRNA alternative splicing events of several pluripotency and/or differentiation genes. Plays a role in the regulation of mRNA stability. Binds to 3'-untranslated region (UTR) AU-rich elements in target transcripts, such as CDKN1A and MYOG, leading to maintain their stabilities. Involved in myogenic differentiation by regulating MYOG levels. Binds to multiple regions in the mRNA 3'-UTR of TP63 isoform 2, hence inducing its destabilization. Also promotes the destabilization of the CHRM2 mRNA via its binding to a region in the coding sequence. Plays a role in the regulation of mRNA translation. Mediates repression of p53/TP53 mRNA translation through its binding to U-rich element in the 3'-UTR, hence preventing EIF4E from binding to p53/TP53 mRNA and translation initiation. Binds to a huge amount of mRNAs. Required for embryonic heart development, sarcomer and M-band formation in striated muscles. Together with RBM20, promotes the expression of short isoforms of PDLIM5/ENH in cardiomyocytes. (Microbial infection) Promotes hepatitis C virus (HCV) replication over translation through the inhibition of viral protein expression. Decreases viral translation by linking viral 5'- and 3'-UTRs, blocking 80S ribosome assembly on the viral IRES and enhancing the interaction of the mature core protein and 5'-UTR. In Homo sapiens (Human), this protein is RNA-binding protein 24.